The chain runs to 515 residues: SWI/SNF-related matrix-associated actin-dependent regulator of chromatin subfamily D member 1 (515 aa).

The segment at 1–128 (MAARAGFQSV…RNHNAKKKKM (128 aa)) is disordered. Residues 14-23 (GGAGASGGAG) are compositionally biased toward gly residues. Residues 43–167 (APGQGLYRSP…DQTIMRKRLD (125 aa)) are interaction with ESR1, NR1H4, NR3C1, PGR and SMARCA4. Asymmetric dimethylarginine is present on residues Arg68 and Arg88. Lys101 is covalently cross-linked (Glycyl lysine isopeptide (Lys-Gly) (interchain with G-Cter in SUMO2)). Over residues 103-117 (PAPQQIKQVQQQAVQ) the composition is skewed to low complexity. An interaction with SMARCC1 and SMARCC2 region spans residues 168–474 (IQEALKRPIK…VMTDVVGNSE (307 aa)). Residues 180-515 (RKLRIFISNT…LEQALGIRNT (336 aa)) are necessary for GR/NR3C1-mediated remodeling and transcription from chromatin; required for GR/NR3C1 interaction with the BRG1/SMARCA4 complex in vivo. Position 203 is a phosphothreonine (Thr203). Residue Lys223 is modified to N6-acetyllysine. One can recognise an SWIB/MDM2 domain in the interval 290–367 (YQPPQFKLDP…PQRLHALLMP (78 aa)). The stretch at 412-440 (ASQQEIATLDNKIHETIETINQLKTQREF) forms a coiled coil.

This sequence belongs to the SMARCD family. In terms of assembly, component of the multiprotein chromatin-remodeling complexes SWI/SNF: SWI/SNF-A (BAF), SWI/SNF-B (PBAF) and related complexes. The canonical complex contains a catalytic subunit (either SMARCA4/BRG1/BAF190A or SMARCA2/BRM/BAF190B), and at least SMARCE1, ACTL6A/BAF53, SMARCC1/BAF155, SMARCC2/BAF170, and SMARCB1/SNF5/BAF47. Other subunits specific to each of the complexes may also be present permitting several possible combinations developmentally and tissue specific. Component of the BAF complex, which includes at least actin (ACTB), ARID1A/BAF250A, ARID1B/BAF250B, SMARCA2/BRM, SMARCA4/BRG1/BAF190A, ACTL6A/BAF53, ACTL6B/BAF53B, SMARCE1/BAF57, SMARCC1/BAF155, SMARCC2/BAF170, SMARCB1/SNF5/INI1, and one or more SMARCD1/BAF60A, SMARCD2/BAF60B, or SMARCD3/BAF60C. In muscle cells, the BAF complex also contains DPF3. Component of neural progenitors-specific chromatin remodeling complex (npBAF complex) composed of at least, ARID1A/BAF250A or ARID1B/BAF250B, SMARCD1/BAF60A, SMARCD3/BAF60C, SMARCA2/BRM/BAF190B, SMARCA4/BRG1/BAF190A, SMARCB1/BAF47, SMARCC1/BAF155, SMARCE1/BAF57, SMARCC2/BAF170, PHF10/BAF45A, ACTL6A/BAF53A and actin. Component of neuron-specific chromatin remodeling complex (nBAF complex) composed of at least, ARID1A/BAF250A or ARID1B/BAF250B, SMARCD1/BAF60A, SMARCD3/BAF60C, SMARCA2/BRM/BAF190B, SMARCA4/BRG1/BAF190A, SMARCB1/BAF47, SMARCC1/BAF155, SMARCE1/BAF57, SMARCC2/BAF170, DPF1/BAF45B, DPF3/BAF45C, ACTL6B/BAF53B and actin. Component of the SWI/SNF-B (PBAF) chromatin remodeling complex, at least composed of SMARCA4/BRG1, SMARCB1/BAF47/SNF5, ACTL6A/BAF53A or ACTL6B/BAF53B, SMARCE1/BAF57, SMARCD1/BAF60A, SMARCD2/BAF60B, perhaps SMARCD3/BAF60C, SMARCC1/BAF155, SMARCC2/BAF170, PBRM1/BAF180, ARID2/BAF200 and actin (ACTB). Component of SWI/SNF (GBAF) subcomplex, which includes at least BICRA or BICRAL (mutually exclusive), BRD9, SS18, SMARCA2/BRM, SMARCA4/BRG1/BAF190A, ACTL6A/BAF53, SMARCC1/BAF155, and SMARCD1/BAF60A. Specifically interacts with the VDR heterodimer complex. Interacts with ESR1, NR3C1, NR1H4, PGR, SMARCA4, SMARCC1 and SMARCC2. Interacts with DPF2. Interacts with FOS, FOSB, FOSL1 and FOSL2.

Its subcellular location is the nucleus. In terms of biological role, involved in transcriptional activation and repression of select genes by chromatin remodeling (alteration of DNA-nucleosome topology). Component of SWI/SNF chromatin remodeling complexes that carry out key enzymatic activities, changing chromatin structure by altering DNA-histone contacts within a nucleosome in an ATP-dependent manner. Belongs to the neural progenitors-specific chromatin remodeling complex (npBAF complex) and the neuron-specific chromatin remodeling complex (nBAF complex). During neural development a switch from a stem/progenitor to a postmitotic chromatin remodeling mechanism occurs as neurons exit the cell cycle and become committed to their adult state. The transition from proliferating neural stem/progenitor cells to postmitotic neurons requires a switch in subunit composition of the npBAF and nBAF complexes. As neural progenitors exit mitosis and differentiate into neurons, npBAF complexes which contain ACTL6A/BAF53A and PHF10/BAF45A, are exchanged for homologous alternative ACTL6B/BAF53B and DPF1/BAF45B or DPF3/BAF45C subunits in neuron-specific complexes (nBAF). The npBAF complex is essential for the self-renewal/proliferative capacity of the multipotent neural stem cells. The nBAF complex along with CREST plays a role regulating the activity of genes essential for dendrite growth. Has a strong influence on vitamin D-mediated transcriptional activity from an enhancer vitamin D receptor element (VDRE). May be a link between mammalian SWI-SNF-like chromatin remodeling complexes and the vitamin D receptor (VDR) heterodimer. Mediates critical interactions between nuclear receptors and the BRG1/SMARCA4 chromatin-remodeling complex for transactivation. Interacts with AKIRIN2. The protein is SWI/SNF-related matrix-associated actin-dependent regulator of chromatin subfamily D member 1 (SMARCD1) of Bos taurus (Bovine).